The sequence spans 251 residues: ATP synthase subunit a (251 aa).

7 helical membrane-spanning segments follow: residues 28–48 (FTQSNEIMVLGTAIVLGIIAL), 63–80 (LVEISYNFIMGLCIEQIG), 86–106 (FFPFIFTLFFFVLMGNLLGLF), 115–135 (HVAVTGGLAVLVIVLVTAVAL), 154–176 (ALAPIIVPIEIISYLSRPVSLSI), 195–215 (FMFLLIGALGTFGYFAALLPM), and 219–239 (VTLVGFELLVAFLQAYVFAIL).

Belongs to the ATPase A chain family. In terms of assembly, F-type ATPases have 2 components, CF(1) - the catalytic core - and CF(0) - the membrane proton channel. CF(1) has five subunits: alpha(3), beta(3), gamma(1), delta(1), epsilon(1). CF(0) has three main subunits: a(1), b(2) and c(9-12). The alpha and beta chains form an alternating ring which encloses part of the gamma chain. CF(1) is attached to CF(0) by a central stalk formed by the gamma and epsilon chains, while a peripheral stalk is formed by the delta and b chains.

It localises to the cell inner membrane. Functionally, key component of the proton channel; it plays a direct role in the translocation of protons across the membrane. In Granulibacter bethesdensis (strain ATCC BAA-1260 / CGDNIH1), this protein is ATP synthase subunit a.